The following is a 396-amino-acid chain: Tryptophan synthase beta chain (396 aa).

Lys96 is modified (N6-(pyridoxal phosphate)lysine).

This sequence belongs to the TrpB family. As to quaternary structure, tetramer of two alpha and two beta chains. It depends on pyridoxal 5'-phosphate as a cofactor.

The enzyme catalyses (1S,2R)-1-C-(indol-3-yl)glycerol 3-phosphate + L-serine = D-glyceraldehyde 3-phosphate + L-tryptophan + H2O. It participates in amino-acid biosynthesis; L-tryptophan biosynthesis; L-tryptophan from chorismate: step 5/5. Functionally, the beta subunit is responsible for the synthesis of L-tryptophan from indole and L-serine. The sequence is that of Tryptophan synthase beta chain from Azobacteroides pseudotrichonymphae genomovar. CFP2.